Consider the following 394-residue polypeptide: MAKLDFDRSKEHVNVGTIGHVDHGKTTLTAAIATVLSKKGLSEARDYASIDNAPEEKARGITINTSHIEYQTEKRHYAHVDCPGHADYVKNMITGAAQMDGAILVVAATDGPMPQTREHILLSKQVGVPRMVVFLNKCDMVDDEEMIGLVEMEIRDLLSEYGFDGDNAPIVRGSALKALEGDAVYEDKILELMNAVDTYIENPVKELDKPFLMAVEDVFTITGRGTVATGRVERGRLTLNEEVEIVGLKPTKKTVVTGIEMFRKNLKEALAGDNAGLLLRGVNRDDVERGQVLAKPGSIVPHTEFEAAIYVLKKEEGGRHTPFFKNYKPQFYFRTTDVTGGVEFEAGREMVMPGENVNLKVKLISPIAVEEGTKFSIREGGRTVGAGSVTKIVK.

A tr-type G domain is found at 10–204 (KEHVNVGTIG…AVDTYIENPV (195 aa)). The interval 19–26 (GHVDHGKT) is G1. Residue 19-26 (GHVDHGKT) coordinates GTP. Thr-26 is a Mg(2+) binding site. Residues 60–64 (GITIN) form a G2 region. The G3 stretch occupies residues 81-84 (DCPG). GTP contacts are provided by residues 81-85 (DCPGH) and 136-139 (NKCD). The tract at residues 136 to 139 (NKCD) is G4. The interval 174–176 (SAL) is G5.

It belongs to the TRAFAC class translation factor GTPase superfamily. Classic translation factor GTPase family. EF-Tu/EF-1A subfamily. As to quaternary structure, monomer.

It localises to the cytoplasm. The enzyme catalyses GTP + H2O = GDP + phosphate + H(+). Its function is as follows. GTP hydrolase that promotes the GTP-dependent binding of aminoacyl-tRNA to the A-site of ribosomes during protein biosynthesis. The chain is Elongation factor Tu from Mycoplasmopsis synoviae (strain 53) (Mycoplasma synoviae).